The primary structure comprises 173 residues: 3-isopropylmalate dehydratase small subunit (173 aa).

Belongs to the LeuD family. LeuD type 2 subfamily. In terms of assembly, heterodimer of LeuC and LeuD.

It catalyses the reaction (2R,3S)-3-isopropylmalate = (2S)-2-isopropylmalate. It participates in amino-acid biosynthesis; L-leucine biosynthesis; L-leucine from 3-methyl-2-oxobutanoate: step 2/4. Catalyzes the isomerization between 2-isopropylmalate and 3-isopropylmalate, via the formation of 2-isopropylmaleate. The polypeptide is 3-isopropylmalate dehydratase small subunit (Caldicellulosiruptor saccharolyticus (strain ATCC 43494 / DSM 8903 / Tp8T 6331)).